The sequence spans 294 residues: Pyridoxal 5'-phosphate synthase subunit PdxS (294 aa).

D24 serves as a coordination point for D-ribose 5-phosphate. Catalysis depends on K81, which acts as the Schiff-base intermediate with D-ribose 5-phosphate. Position 153 (G153) interacts with D-ribose 5-phosphate. R165 serves as a coordination point for D-glyceraldehyde 3-phosphate. D-ribose 5-phosphate is bound by residues G214 and 235-236; that span reads GS.

This sequence belongs to the PdxS/SNZ family. In terms of assembly, in the presence of PdxT, forms a dodecamer of heterodimers.

The enzyme catalyses aldehydo-D-ribose 5-phosphate + D-glyceraldehyde 3-phosphate + L-glutamine = pyridoxal 5'-phosphate + L-glutamate + phosphate + 3 H2O + H(+). The protein operates within cofactor biosynthesis; pyridoxal 5'-phosphate biosynthesis. Catalyzes the formation of pyridoxal 5'-phosphate from ribose 5-phosphate (RBP), glyceraldehyde 3-phosphate (G3P) and ammonia. The ammonia is provided by the PdxT subunit. Can also use ribulose 5-phosphate and dihydroxyacetone phosphate as substrates, resulting from enzyme-catalyzed isomerization of RBP and G3P, respectively. The sequence is that of Pyridoxal 5'-phosphate synthase subunit PdxS from Bacillus velezensis (strain DSM 23117 / BGSC 10A6 / LMG 26770 / FZB42) (Bacillus amyloliquefaciens subsp. plantarum).